The sequence spans 1130 residues: BTB/POZ domain-containing protein 7 (1130 aa).

Polar residues predominate over residues 1-10; sequence MGANASNYPH. A disordered region spans residues 1 to 24; the sequence is MGANASNYPHSCSPRVGGNSQAQQ. Gly2 is lipidated: N-myristoyl glycine. BTB domains follow at residues 142–211 and 247–341; these read TDVD…GMED and YDVV…DLSV. Residues 413–479 enclose the BACK domain; it reads YGSKWVHRQA…WGEHQLMKRI (67 aa). Ser722 carries the post-translational modification Phosphoserine. 2 disordered regions span residues 898 to 1050 and 1062 to 1130; these read SEAG…PAHV and FGLT…KSAL. Composition is skewed to basic and acidic residues over residues 923–935 and 996–1005; these read PTLE…RENQ and KKQEDPRREY. Position 1008 is a phosphoserine (Ser1008). Residues 1063–1075 are compositionally biased toward polar residues; it reads GLTSNRPPSHSAC. Composition is skewed to basic and acidic residues over residues 1080 to 1090 and 1101 to 1112; these read LEERSSRRLTD and RNADLERGDSIS.

As to expression, specifically expressed in embryonic epithelia.

The protein resides in the nucleus. Functionally, acts as a mediator of epithelial dynamics and organ branching by promoting cleft progression. Induced following accumulation of fibronectin in forming clefts, leading to local expression of the cell-scattering SNAIL2 and suppression of E-cadherin levels, thereby altering cell morphology and reducing cell-cell adhesion. This stimulates cell separation at the base of forming clefts by local, dynamic intercellular gap formation and promotes cleft progression. The protein is BTB/POZ domain-containing protein 7 (Btbd7) of Mus musculus (Mouse).